Reading from the N-terminus, the 716-residue chain is Polyribonucleotide nucleotidyltransferase (716 aa).

Residues Asp490 and Asp496 each contribute to the Mg(2+) site. In terms of domain architecture, KH spans 556 to 615 (PKIETLTIPTDKIREVIGSGGKVIREIVETSGAKVDINDDGVIKIASNDQAAIKKAYDMI). The 69-residue stretch at 625–693 (GQIYTGKVVK…ERGKVRLGMK (69 aa)) folds into the S1 motif domain. The tract at residues 695-716 (VDQETGQEIQPEKKEKEEAGEA) is disordered. Residues 704-716 (QPEKKEKEEAGEA) are compositionally biased toward basic and acidic residues.

It belongs to the polyribonucleotide nucleotidyltransferase family. The cofactor is Mg(2+).

The protein resides in the cytoplasm. The enzyme catalyses RNA(n+1) + phosphate = RNA(n) + a ribonucleoside 5'-diphosphate. Its function is as follows. Involved in mRNA degradation. Catalyzes the phosphorolysis of single-stranded polyribonucleotides processively in the 3'- to 5'-direction. The sequence is that of Polyribonucleotide nucleotidyltransferase from Cereibacter sphaeroides (strain ATCC 17029 / ATH 2.4.9) (Rhodobacter sphaeroides).